The chain runs to 273 residues: MFGVKDAIFKIKRSIAGTDSSDSTAYTTASESSPQLKDSHNPFRNKTTSERTIVEEGSLPPVRLNGYLPSTKNKLLTPEMCDEIRTLMPTRIQLYTEWNLLYSLEQHGSSLHSLYSNVAPDSKEFRRVGYVLVIKDRKNGIFGAYSNEAFHPNEHRQYTGNGECFLWKLDKVPDVNISEKEESEQEGKEGKEEGDKEERWRFSGYPYTGVNEFAIYCTSEFLSMGAGDGHYGLLCDDGLLHGVSNPCQTYGNEVLSKEGKKFSIVALEVWRVG.

Met1 carries the post-translational modification N-acetylmethionine. The span at 18–33 shows a compositional bias: low complexity; it reads TDSSDSTAYTTASESS. Disordered stretches follow at residues 18-48 and 177-197; these read TDSS…NKTT and ISEK…GDKE. Residues 37–48 show a composition bias toward basic and acidic residues; the sequence is KDSHNPFRNKTT. The 200-residue stretch at 74-273 folds into the TLDc domain; sequence KLLTPEMCDE…IVALEVWRVG (200 aa). Ser178 is subject to Phosphoserine.

This sequence belongs to the OXR1 family.

The protein resides in the mitochondrion. In terms of biological role, involved in protection from oxidative damage. This is Oxidation resistance protein 1 (OXR1) from Saccharomyces cerevisiae (strain ATCC 204508 / S288c) (Baker's yeast).